The primary structure comprises 371 residues: Chorismate synthase (371 aa).

NADP(+) contacts are provided by arginine 48 and arginine 54. FMN is bound by residues 130–132, 242–243, glycine 287, 302–306, and arginine 328; these read RSS, NA, and KPTSS.

The protein belongs to the chorismate synthase family. As to quaternary structure, homotetramer. Requires FMNH2 as cofactor.

The catalysed reaction is 5-O-(1-carboxyvinyl)-3-phosphoshikimate = chorismate + phosphate. The protein operates within metabolic intermediate biosynthesis; chorismate biosynthesis; chorismate from D-erythrose 4-phosphate and phosphoenolpyruvate: step 7/7. Functionally, catalyzes the anti-1,4-elimination of the C-3 phosphate and the C-6 proR hydrogen from 5-enolpyruvylshikimate-3-phosphate (EPSP) to yield chorismate, which is the branch point compound that serves as the starting substrate for the three terminal pathways of aromatic amino acid biosynthesis. This reaction introduces a second double bond into the aromatic ring system. The chain is Chorismate synthase from Azorhizobium caulinodans (strain ATCC 43989 / DSM 5975 / JCM 20966 / LMG 6465 / NBRC 14845 / NCIMB 13405 / ORS 571).